The following is a 125-amino-acid chain: MDTIKLSIVTPNGEIFNDDVKTVTLPGKEGEFGVLPGHSSLVSSLTVGVIVIEKVDSTEAVAINWGHVKVDEKSVDVLADGAIALTAGKDSEIAKNIEAAKELVNSVKDSNISVAAVEAKINSFA.

The protein belongs to the ATPase epsilon chain family. In terms of assembly, F-type ATPases have 2 components, CF(1) - the catalytic core - and CF(0) - the membrane proton channel. CF(1) has five subunits: alpha(3), beta(3), gamma(1), delta(1), epsilon(1). CF(0) has three main subunits: a, b and c.

It localises to the cell inner membrane. Functionally, produces ATP from ADP in the presence of a proton gradient across the membrane. This is ATP synthase epsilon chain from Aliarcobacter butzleri (strain RM4018) (Arcobacter butzleri).